A 93-amino-acid polypeptide reads, in one-letter code: SH3 domain-binding glutamic acid-rich-like protein 3 (93 aa).

Residue Ser-2 is modified to N-acetylserine. The region spanning 2 to 93 (SGLRVYSTSV…DTLQEFLKLA (92 aa)) is the Glutaredoxin domain. An O-linked (GalNAc...) threonine glycan is attached at Thr-9.

Belongs to the SH3BGR family. In terms of assembly, homodimer. Interacts with MYO1C (via its IQ motifs); the interaction is dependent on calcium and takes place at membrane ruffles. In terms of processing, may be glycosylated.

Its subcellular location is the cytoplasm. The protein localises to the cytosol. It localises to the cell projection. It is found in the ruffle membrane. The protein resides in the nucleus. Its function is as follows. Could act as a modulator of glutaredoxin biological activity. May play a role in cytoskeleton organization. The protein is SH3 domain-binding glutamic acid-rich-like protein 3 (Sh3bgrl3) of Mus musculus (Mouse).